Here is a 423-residue protein sequence, read N- to C-terminus: LysM domain-containing GPI-anchored protein 3 (423 aa).

The signal sequence occupies residues Met1–Ala24. 4 cysteine pairs are disulfide-bonded: Cys31/Cys97, Cys37/Cys160, Cys95/Cys158, and Cys97/Cys160. Residues Thr107–Ile154 enclose the LysM 1 domain. N-linked (GlcNAc...) asparagine glycosylation is present at Asn162. A LysM 2 domain is found at Leu173–Val216. 2 disulfide bridges follow: Cys221–Cys253 and Cys248–Cys276. Asn238 carries an N-linked (GlcNAc...) asparagine glycan. N-linked (GlcNAc...) asparagine glycosylation occurs at Asn285. Gly394 is lipidated: GPI-anchor amidated glycine. Positions Gly395 to Phe423 are cleaved as a propeptide — removed in mature form.

In terms of assembly, interacts with peptidoglycans.

The protein resides in the cell membrane. Its function is as follows. Required as a cell surface receptor for peptidoglycan (PGN) elicitor signaling leading to innate immunity. Plays an essential role in detecting PGNs and restricting bacterial growth (of Pseudomonas syringae pv. tomato DC3000 for example). In Arabidopsis thaliana (Mouse-ear cress), this protein is LysM domain-containing GPI-anchored protein 3 (LYM3).